The primary structure comprises 140 residues: uncharacterized protein (140 aa).

It belongs to the SufE family.

This is an uncharacterized protein from Rhizobium meliloti (strain 1021) (Ensifer meliloti).